Consider the following 334-residue polypeptide: Formamidase (334 aa).

Residues 14 to 260 (MLMGLVQYPV…WEIVTAEVFP (247 aa)) form the CN hydrolase domain. Residue E60 is the Proton acceptor of the active site. The Proton donor role is filled by K133. C166 acts as the Nucleophile in catalysis.

It belongs to the carbon-nitrogen hydrolase superfamily. Aliphatic amidase family.

The catalysed reaction is formamide + H2O = formate + NH4(+). Is an aliphatic amidase with a restricted substrate specificity, as it only hydrolyzes formamide. The sequence is that of Formamidase from Nitratidesulfovibrio vulgaris (strain DP4) (Desulfovibrio vulgaris).